A 305-amino-acid polypeptide reads, in one-letter code: Superoxide dismutase [Fe] 2, chloroplastic (305 aa).

A chloroplast-targeting transit peptide spans 1–46; that stretch reads MMNVAVTATPSSLLYSPLLLPSQGPNRRMQWKRNGKRRLGTKVAVS. Residues H77, H129, D228, and H232 each coordinate Fe cation. Positions 270–305 are disordered; the sequence is AVQREQEGTETEDEENPDDEVPEVYLDSDIDVSEVD. Residues 277–305 show a composition bias toward acidic residues; the sequence is GTETEDEENPDDEVPEVYLDSDIDVSEVD.

The protein belongs to the iron/manganese superoxide dismutase family. As to quaternary structure, heterodimer with FSD3. Interacts with MRL7 and PRDA1. Fe cation is required as a cofactor.

The protein localises to the plastid. Its subcellular location is the chloroplast thylakoid. The catalysed reaction is 2 superoxide + 2 H(+) = H2O2 + O2. With respect to regulation, activated by cpn20/cpn21 (in vitro). Destroys superoxide anion radicals which are normally produced within the cells and which are toxic to biological systems. Plays important role in chloroplast development, particularly in the maintenance of thylakoids membranes. Seems to act as a heterodimer with FSD3. This chain is Superoxide dismutase [Fe] 2, chloroplastic (FSD2), found in Arabidopsis thaliana (Mouse-ear cress).